The sequence spans 307 residues: MAAITASMVAELRGKTDAPMMECKRALTEAQGDMVKAEELLRVKLGSKAGKAAGRITAEGVITSYMEADVGALLEVNCETDFVTKNDSFLALANAAVKLIAQNNPADLAALAALPYTQDGFGPTLEDVRKGLIGKIGENMSFRRFKRFASGAKLASYLHGTRIGVVVEFDGDATAAKDVAMHVAAMKPVALSSDDVPAELVARERSVAAAKAAEDASVATAAGKPVQSAEIVAKRIEGGVQKYLKEVSLFNQSFVKNDKQTVEQMLKATGTTVKAFTLYVVGEGIEKKVEDFAAEVAAQMAAAKQAS.

The tract at residues 80-83 (TDFV) is involved in Mg(2+) ion dislocation from EF-Tu.

The protein belongs to the EF-Ts family.

Its subcellular location is the cytoplasm. In terms of biological role, associates with the EF-Tu.GDP complex and induces the exchange of GDP to GTP. It remains bound to the aminoacyl-tRNA.EF-Tu.GTP complex up to the GTP hydrolysis stage on the ribosome. This Albidiferax ferrireducens (strain ATCC BAA-621 / DSM 15236 / T118) (Rhodoferax ferrireducens) protein is Elongation factor Ts.